The chain runs to 375 residues: Growth/differentiation factor 8 (375 aa).

Residues 1 to 18 (MQKLQISVYIYLFVLILA) form the signal peptide. Positions 19–266 (GPVDLNENSE…VTDTPKRSRR (248 aa)) are excised as a propeptide. N-linked (GlcNAc...) asparagine glycosylation occurs at Asn71. 4 disulfides stabilise this stretch: Cys272-Cys282, Cys281-Cys340, Cys309-Cys372, and Cys313-Cys374.

Belongs to the TGF-beta family. As to quaternary structure, homodimer; disulfide-linked. Interacts with WFIKKN2, leading to inhibit its activity. Interacts with FSTL3. In terms of processing, synthesized as large precursor molecule that undergoes proteolytic cleavage to generate an N-terminal propeptide and a disulfide linked C-terminal dimer, which is the biologically active molecule. The circulating form consists of a latent complex of the C-terminal dimer and other proteins, including its propeptide, which maintain the C-terminal dimer in a latent, inactive state. Ligand activation requires additional cleavage of the prodomain by a tolloid-like metalloproteinase.

The protein resides in the secreted. In terms of biological role, acts specifically as a negative regulator of skeletal muscle growth. This chain is Growth/differentiation factor 8 (MSTN), found in Equus caballus (Horse).